A 201-amino-acid chain; its full sequence is Troponin I (201 aa).

N-acetylalanine is present on Ala-1. Positions 1–33 are enriched in basic and acidic residues; the sequence is ADKAKAAEEAKKKQDDIDRKKAEVRKRLEEQSL. Positions 1–45 are disordered; it reads ADKAKAAEEAKKKQDDIDRKKAEVRKRLEEQSLKKQKKGFMTPER. Positions 108–117 are troponin T-interaction; the sequence is IESDKYDVEL. Residues 135–148 are actin-binding; the sequence is DLRGKFIKPTLKKV. N6,N6,N6-trimethyllysine occurs at positions 142 and 146. Positions 182 to 201 are disordered; that stretch reads EDDKGATEGDGPAAEEVAAE.

The protein belongs to the troponin I family.

Its function is as follows. Troponin I is the actomyosin ATPase inhibitory subunit present in the thin filament regulatory complex. The sequence is that of Troponin I from Astacus leptodactylus (Turkish narrow-clawed crayfish).